The following is a 261-amino-acid chain: Glucosamine-6-phosphate deaminase (261 aa).

Residue Asp67 is the Proton acceptor; for enolization step of the active site. Asp136 functions as the For ring-opening step in the catalytic mechanism. The active-site Proton acceptor; for ring-opening step is the His138. The For ring-opening step role is filled by Glu143.

It belongs to the glucosamine/galactosamine-6-phosphate isomerase family. NagB subfamily.

The enzyme catalyses alpha-D-glucosamine 6-phosphate + H2O = beta-D-fructose 6-phosphate + NH4(+). Its pathway is amino-sugar metabolism; N-acetylneuraminate degradation; D-fructose 6-phosphate from N-acetylneuraminate: step 5/5. In terms of biological role, catalyzes the reversible isomerization-deamination of glucosamine 6-phosphate (GlcN6P) to form fructose 6-phosphate (Fru6P) and ammonium ion. The polypeptide is Glucosamine-6-phosphate deaminase (Streptomyces coelicolor (strain ATCC BAA-471 / A3(2) / M145)).